Here is a 383-residue protein sequence, read N- to C-terminus: Succinyl-diaminopimelate desuccinylase (383 aa).

H73 is a Zn(2+) binding site. Residue D75 is part of the active site. Residue D107 participates in Zn(2+) binding. The active-site Proton acceptor is the E141. Zn(2+)-binding residues include E142, E170, and H356.

Belongs to the peptidase M20A family. DapE subfamily. Homodimer. Requires Zn(2+) as cofactor. It depends on Co(2+) as a cofactor.

The enzyme catalyses N-succinyl-(2S,6S)-2,6-diaminopimelate + H2O = (2S,6S)-2,6-diaminopimelate + succinate. It participates in amino-acid biosynthesis; L-lysine biosynthesis via DAP pathway; LL-2,6-diaminopimelate from (S)-tetrahydrodipicolinate (succinylase route): step 3/3. Its function is as follows. Catalyzes the hydrolysis of N-succinyl-L,L-diaminopimelic acid (SDAP), forming succinate and LL-2,6-diaminopimelate (DAP), an intermediate involved in the bacterial biosynthesis of lysine and meso-diaminopimelic acid, an essential component of bacterial cell walls. This is Succinyl-diaminopimelate desuccinylase from Pseudomonas putida (strain GB-1).